A 330-amino-acid chain; its full sequence is 4-hydroxythreonine-4-phosphate dehydrogenase (330 aa).

2 residues coordinate substrate: His136 and Thr137. A divalent metal cation is bound by residues His166, His211, and His266. Residues Lys274, Asn283, and Arg292 each contribute to the substrate site.

It belongs to the PdxA family. Homodimer. Zn(2+) is required as a cofactor. The cofactor is Mg(2+). Requires Co(2+) as cofactor.

Its subcellular location is the cytoplasm. The catalysed reaction is 4-(phosphooxy)-L-threonine + NAD(+) = 3-amino-2-oxopropyl phosphate + CO2 + NADH. Its pathway is cofactor biosynthesis; pyridoxine 5'-phosphate biosynthesis; pyridoxine 5'-phosphate from D-erythrose 4-phosphate: step 4/5. Catalyzes the NAD(P)-dependent oxidation of 4-(phosphooxy)-L-threonine (HTP) into 2-amino-3-oxo-4-(phosphooxy)butyric acid which spontaneously decarboxylates to form 3-amino-2-oxopropyl phosphate (AHAP). The sequence is that of 4-hydroxythreonine-4-phosphate dehydrogenase from Sodalis glossinidius (strain morsitans).